The primary structure comprises 461 residues: Photosystem II CP43 reaction center protein (461 aa).

The propeptide occupies 1–2 (ME). At T3 the chain carries N-acetylthreonine. T3 is subject to Phosphothreonine. Transmembrane regions (helical) follow at residues 57 to 81 (LFEV…PHLA), 122 to 143 (LLGP…KDRN), 166 to 188 (KALY…RKIT), 243 to 263 (KPFA…LSYS), and 279 to 300 (WFNN…ASQA). [CaMn4O5] cluster is bound at residue E355. The chain crosses the membrane as a helical span at residues 435-459 (RARAAAAGFEKGIDRDFEPVLSMTP).

It belongs to the PsbB/PsbC family. PsbC subfamily. As to quaternary structure, PSII is composed of 1 copy each of membrane proteins PsbA, PsbB, PsbC, PsbD, PsbE, PsbF, PsbH, PsbI, PsbJ, PsbK, PsbL, PsbM, PsbT, PsbX, PsbY, PsbZ, Psb30/Ycf12, at least 3 peripheral proteins of the oxygen-evolving complex and a large number of cofactors. It forms dimeric complexes. Requires Binds multiple chlorophylls and provides some of the ligands for the Ca-4Mn-5O cluster of the oxygen-evolving complex. It may also provide a ligand for a Cl- that is required for oxygen evolution. PSII binds additional chlorophylls, carotenoids and specific lipids. as cofactor.

It is found in the plastid. The protein localises to the chloroplast thylakoid membrane. One of the components of the core complex of photosystem II (PSII). It binds chlorophyll and helps catalyze the primary light-induced photochemical processes of PSII. PSII is a light-driven water:plastoquinone oxidoreductase, using light energy to abstract electrons from H(2)O, generating O(2) and a proton gradient subsequently used for ATP formation. In Platanus occidentalis (Sycamore), this protein is Photosystem II CP43 reaction center protein.